The following is a 384-amino-acid chain: 8-amino-7-oxononanoate synthase (384 aa).

Arg-21 contributes to the substrate binding site. 108–109 provides a ligand contact to pyridoxal 5'-phosphate; sequence GF. Substrate is bound at residue His-133. The pyridoxal 5'-phosphate site is built by Ser-179, His-207, and Thr-233. Lys-236 bears the N6-(pyridoxal phosphate)lysine mark. Thr-352 contacts substrate.

It belongs to the class-II pyridoxal-phosphate-dependent aminotransferase family. BioF subfamily. Homodimer. Requires pyridoxal 5'-phosphate as cofactor.

It catalyses the reaction 6-carboxyhexanoyl-[ACP] + L-alanine + H(+) = (8S)-8-amino-7-oxononanoate + holo-[ACP] + CO2. It participates in cofactor biosynthesis; biotin biosynthesis. In terms of biological role, catalyzes the decarboxylative condensation of pimeloyl-[acyl-carrier protein] and L-alanine to produce 8-amino-7-oxononanoate (AON), [acyl-carrier protein], and carbon dioxide. In Shigella dysenteriae serotype 1 (strain Sd197), this protein is 8-amino-7-oxononanoate synthase.